The chain runs to 234 residues: CD-NTase-associated protein 13 (234 aa).

Residues 20 to 42 (TIMKNVIANVSTAITLALMILWI) traverse the membrane as a helical segment.

The protein in the C-terminal section; belongs to the bacterial STING family.

It is found in the cell inner membrane. In terms of biological role, effector protein of a CBASS antivirus system. CBASS (cyclic oligonucleotide-based antiphage signaling system) provides immunity against bacteriophage. The CD-NTase protein synthesizes cyclic nucleotides in response to infection; these serve as specific second messenger signals. The signals activate a diverse range of effectors, leading to bacterial cell death and thus abortive phage infection. A type I-D CBASS(GG) system. Binds c-di-GMP (synthesized by the cognate CdnE encoded upstream in the same operon) and about 10-fold less well 3'3'-cGAMP, but not c-di-AMP, 2'3'-cGAMP or cUMP-AMP (tested with a protein without the transmembrane region). The effector protein for this CBASS system, its activity is stimulated by c-di-GMP and leads to cell death. The polypeptide is CD-NTase-associated protein 13 (Roseivirga ehrenbergii (strain DSM 102268 / JCM 13514 / KCTC 12282 / NCIMB 14502 / KMM 6017)).